Reading from the N-terminus, the 462-residue chain is Glycogen synthase 1 (462 aa).

R6 is a binding site for ADP-alpha-D-glucose.

Belongs to the glycosyltransferase 1 family. Bacterial/plant glycogen synthase subfamily.

It catalyses the reaction [(1-&gt;4)-alpha-D-glucosyl](n) + ADP-alpha-D-glucose = [(1-&gt;4)-alpha-D-glucosyl](n+1) + ADP + H(+). It participates in glycan biosynthesis; glycogen biosynthesis. In terms of biological role, synthesizes alpha-1,4-glucan chains using ADP-glucose. The protein is Glycogen synthase 1 of Bradyrhizobium diazoefficiens (strain JCM 10833 / BCRC 13528 / IAM 13628 / NBRC 14792 / USDA 110).